We begin with the raw amino-acid sequence, 307 residues long: MNWITNYVRPKINSMLGRREMPENLWIKDPESGEMVFHKDLEENQWVVPASGYHIKISAKDRLKHFFDNGAYETLENPKAGVDPLKFRDERRYIDRLRDAKAKTNLDDAVVNAIGRIEGLEILATVQDFAFMGGSLGMAAGEAIVRGFETAVERRLPLVLFAASGGARMQEGILSLMQLPRTTVAVDRLKEAGLPYIVVLTNPTTGGVTASYAMLGDVHIAEPGALIGFAGPRVIEQTIREKLPEGFQRAEYLKEHGMVDMVVSRLEMKATIARLLKILLKEQATEENGSRRLPAPEAAVVEAAVNA.

The 270-residue stretch at 25–294 (LWIKDPESGE…TEENGSRRLP (270 aa)) folds into the CoA carboxyltransferase N-terminal domain.

The protein belongs to the AccD/PCCB family. Acetyl-CoA carboxylase is a heterohexamer composed of biotin carboxyl carrier protein (AccB), biotin carboxylase (AccC) and two subunits each of ACCase subunit alpha (AccA) and ACCase subunit beta (AccD).

It localises to the cytoplasm. It carries out the reaction N(6)-carboxybiotinyl-L-lysyl-[protein] + acetyl-CoA = N(6)-biotinyl-L-lysyl-[protein] + malonyl-CoA. Its pathway is lipid metabolism; malonyl-CoA biosynthesis; malonyl-CoA from acetyl-CoA: step 1/1. Its function is as follows. Component of the acetyl coenzyme A carboxylase (ACC) complex. Biotin carboxylase (BC) catalyzes the carboxylation of biotin on its carrier protein (BCCP) and then the CO(2) group is transferred by the transcarboxylase to acetyl-CoA to form malonyl-CoA. The sequence is that of Acetyl-coenzyme A carboxylase carboxyl transferase subunit beta from Chelativorans sp. (strain BNC1).